The sequence spans 110 residues: Parvalbumin alpha (110 aa).

Serine 2 bears the N-acetylserine mark. A phosphoserine mark is found at serine 2 and serine 24. EF-hand domains are found at residues 39–74 (KSPE…FSPD) and 78–110 (LSVK…VAES). Ca(2+)-binding residues include aspartate 52, aspartate 54, serine 56, phenylalanine 58, glutamate 60, glutamate 63, aspartate 91, aspartate 93, aspartate 95, lysine 97, and glutamate 102.

It belongs to the parvalbumin family.

Its function is as follows. In muscle, parvalbumin is thought to be involved in relaxation after contraction. It binds two calcium ions. This chain is Parvalbumin alpha (PVALB), found in Bos taurus (Bovine).